The following is a 248-amino-acid chain: 1,2-phenylacetyl-CoA epoxidase, subunit C (248 aa).

Substrate contacts are provided by residues 76–79 (QFSN) and 177–179 (IAL).

As to quaternary structure, forms a stable heterotetramer (dimer of heterodimers) with PaaA and a stable heterodimer with PaaB.

It functions in the pathway aromatic compound metabolism; phenylacetate degradation. Its function is as follows. Component of 1,2-phenylacetyl-CoA epoxidase multicomponent enzyme system which catalyzes the reduction of phenylacetyl-CoA (PA-CoA) to form 1,2-epoxyphenylacetyl-CoA. The subunit C may be essential for structural integrity of the alpha subunit. In Escherichia coli (strain K12), this protein is 1,2-phenylacetyl-CoA epoxidase, subunit C (paaC).